The primary structure comprises 646 residues: Lipoteichoic acid synthase (646 aa).

Over 1–7 (MKLHKKK) the chain is Cytoplasmic. Residues 8–28 (LTLFAFFILTVLTVTLKTYFS) form a helical membrane-spanning segment. Over 29 to 43 (YYVDFSLGVKGLVQN) the chain is Extracellular. The helical transmembrane segment at 44 to 64 (LILLMNPYSLIALVLSIFLFF) threads the bilayer. At 65 to 68 (KGKK) the chain is on the cytoplasmic side. A helical membrane pass occupies residues 69–89 (AFWFIFIGGFILTFLLYANVV). Over 90–119 (YFRFFSDFLTFSTLNQAGNVESMGGAVTAS) the chain is Extracellular. Residues 120-140 (FKWYDFVYFIDTIIYLFVLIF) form a helical membrane-spanning segment. Residues 141–153 (KQKWLDKRVFSKK) lie on the Cytoplasmic side of the membrane. A helical membrane pass occupies residues 154–174 (FVPVVMAASIALFFLNLAFAE). Over 175–646 (SDRPELLTRT…KTGPKGQERK (472 aa)) the chain is Extracellular. Mn(2+) is bound by residues Glu255 and Thr300. Thr300 is an active-site residue. His416 is a substrate binding site. The Mn(2+) site is built by Asp475 and His476. Positions 579–646 (IYDNKNNEPM…KTGPKGQERK (68 aa)) are disordered. Composition is skewed to basic and acidic residues over residues 580-607 (YDNK…KDLQ) and 625-646 (DFDK…QERK).

This sequence belongs to the LTA synthase family. Post-translationally, proteolytically cleaved.

It localises to the cell membrane. The protein resides in the secreted. It participates in cell wall biogenesis; lipoteichoic acid biosynthesis. Functionally, catalyzes the polymerization of lipoteichoic acid (LTA) polyglycerol phosphate, a reaction that presumably uses phosphatidylglycerol (PG) as substrate. Is required for staphylococcal growth and cell division process. The protein is Lipoteichoic acid synthase (ltaS) of Staphylococcus saprophyticus subsp. saprophyticus (strain ATCC 15305 / DSM 20229 / NCIMB 8711 / NCTC 7292 / S-41).